The chain runs to 188 residues: MRVIASSIRKGNVLEQDGKLYVVLSAENIHPGKGTPVSQIEMRRISDGVKVSERYKTTDQVEKATIEERNYTFLYEDGEGFHFMEPESFDQVQVTKDVVGNSAPYLAENMVVKLSMHDTTAVAITLPQRATLEVVETEPVTKGQTASSSYKPAILSNGVRTAVPPHVGVGTRVVVLTEDGSYVERAKD.

Belongs to the elongation factor P family.

The protein resides in the cytoplasm. The protein operates within protein biosynthesis; polypeptide chain elongation. In terms of biological role, involved in peptide bond synthesis. Stimulates efficient translation and peptide-bond synthesis on native or reconstituted 70S ribosomes in vitro. Probably functions indirectly by altering the affinity of the ribosome for aminoacyl-tRNA, thus increasing their reactivity as acceptors for peptidyl transferase. The protein is Elongation factor P of Rhodopseudomonas palustris (strain BisB5).